The primary structure comprises 741 residues: Eukaryotic translation initiation factor 3 subunit B (741 aa).

The segment covering 1-10 (MAPSFDTLSE) has biased composition (polar residues). Residues 1–22 (MAPSFDTLSEQDLHEEEEEEID) are disordered. Residues 13–22 (LHEEEEEEID) are compositionally biased toward acidic residues. An RRM domain is found at 40–126 (TFVVIDGLPV…HTLLVNKLMD (87 aa)). 5 WD repeats span residues 193 to 230 (AHWT…KQKQ), 232 to 289 (PHPF…RSFV), 303 to 344 (QPKK…LLGK), 514 to 557 (IEKK…EKPE), and 572 to 610 (LEHY…HTFS). Residues 695–722 (KDAYGLPEDVDDPKKAKDAPAVTSEQGE) form a disordered region.

This sequence belongs to the eIF-3 subunit B family. In terms of assembly, component of the eukaryotic translation initiation factor 3 (eIF-3) complex.

It is found in the cytoplasm. RNA-binding component of the eukaryotic translation initiation factor 3 (eIF-3) complex, which is involved in protein synthesis of a specialized repertoire of mRNAs and, together with other initiation factors, stimulates binding of mRNA and methionyl-tRNAi to the 40S ribosome. The eIF-3 complex specifically targets and initiates translation of a subset of mRNAs involved in cell proliferation. This Aspergillus clavatus (strain ATCC 1007 / CBS 513.65 / DSM 816 / NCTC 3887 / NRRL 1 / QM 1276 / 107) protein is Eukaryotic translation initiation factor 3 subunit B (prt1).